A 532-amino-acid chain; its full sequence is Monolignol oxidoreductase AtBBE-like 15 (532 aa).

The N-terminal stretch at 1–27 (MAFAISKRNATLFLVTLLLISVPLSSS) is a signal peptide. Cysteine 36 and cysteine 100 are disulfide-bonded. Residue asparagine 57 is glycosylated (N-linked (GlcNAc...) asparagine). One can recognise an FAD-binding PCMH-type domain in the interval 76-254 (TPSNPKPVFI…LAWKIKLVPV (179 aa)). Positions 115–179 (HDYEGLSFVA…QTHGFPAGLC (65 aa)) form a cross-link, 6-(S-cysteinyl)-8alpha-(pros-histidyl)-FAD (His-Cys). N-linked (GlcNAc...) asparagine glycosylation is found at asparagine 306 and asparagine 431.

The protein belongs to the oxygen-dependent FAD-linked oxidoreductase family. The cofactor is FAD. The FAD cofactor is bound via a bicovalent 6-S-cysteinyl, 8alpha-N1-histidyl FAD linkage. As to expression, expressed in sepals and stamen.

The protein localises to the secreted. It is found in the cell wall. It carries out the reaction (E)-4-coumaroyl alcohol + A = (E)-4-coumaraldehyde + AH2. The catalysed reaction is (E)-coniferol + A = (E)-coniferaldehyde + AH2. It catalyses the reaction (E)-sinapyl alcohol + A = (E)-sinapaldehyde + AH2. The enzyme catalyses 4-O-(beta-D-glucosyl)-(E)-coniferol + A = 4-O-(beta-D-glucosyl)-4-(E)-coniferyl aldehyde + AH2. Its function is as follows. Required for endosperm development and polar nuclei fusion. Mediates oxidation of p-hydroxylated derivatives of cinnamyl alcohol (i.e. the monolignols p-coumaryl-, coniferyl-, and sinapyl alcohol) to their corresponding aldehydes. Can also use the beta-O-glycosylated form of coniferyl alcohol (coniferin) as substrate, but is much less efficient towards cinnamyl alcohol. The electron acceptor required for these reactions is not known, but does not seem to be dioxygen. The chain is Monolignol oxidoreductase AtBBE-like 15 from Arabidopsis thaliana (Mouse-ear cress).